The chain runs to 462 residues: Argininosuccinate lyase (462 aa).

It belongs to the lyase 1 family. Argininosuccinate lyase subfamily.

It is found in the cytoplasm. The enzyme catalyses 2-(N(omega)-L-arginino)succinate = fumarate + L-arginine. It functions in the pathway amino-acid biosynthesis; L-arginine biosynthesis; L-arginine from L-ornithine and carbamoyl phosphate: step 3/3. The chain is Argininosuccinate lyase from Bacillus mycoides (strain KBAB4) (Bacillus weihenstephanensis).